The sequence spans 329 residues: Ketol-acid reductoisomerase (NADP(+)) (329 aa).

Residues methionine 1 to threonine 181 form the KARI N-terminal Rossmann domain. Residues tyrosine 24–glutamine 27, arginine 47, and aspartate 82–glutamine 85 each bind NADP(+). Residue histidine 107 is part of the active site. Glycine 133 lines the NADP(+) pocket. Positions threonine 182 to leucine 327 constitute a KARI C-terminal knotted domain. 4 residues coordinate Mg(2+): aspartate 190, glutamate 194, glutamate 226, and glutamate 230. Serine 251 is a binding site for substrate.

The protein belongs to the ketol-acid reductoisomerase family. Mg(2+) serves as cofactor.

The enzyme catalyses (2R)-2,3-dihydroxy-3-methylbutanoate + NADP(+) = (2S)-2-acetolactate + NADPH + H(+). It carries out the reaction (2R,3R)-2,3-dihydroxy-3-methylpentanoate + NADP(+) = (S)-2-ethyl-2-hydroxy-3-oxobutanoate + NADPH + H(+). It functions in the pathway amino-acid biosynthesis; L-isoleucine biosynthesis; L-isoleucine from 2-oxobutanoate: step 2/4. Its pathway is amino-acid biosynthesis; L-valine biosynthesis; L-valine from pyruvate: step 2/4. Involved in the biosynthesis of branched-chain amino acids (BCAA). Catalyzes an alkyl-migration followed by a ketol-acid reduction of (S)-2-acetolactate (S2AL) to yield (R)-2,3-dihydroxy-isovalerate. In the isomerase reaction, S2AL is rearranged via a Mg-dependent methyl migration to produce 3-hydroxy-3-methyl-2-ketobutyrate (HMKB). In the reductase reaction, this 2-ketoacid undergoes a metal-dependent reduction by NADPH to yield (R)-2,3-dihydroxy-isovalerate. The chain is Ketol-acid reductoisomerase (NADP(+)) from Solidesulfovibrio magneticus (strain ATCC 700980 / DSM 13731 / RS-1) (Desulfovibrio magneticus).